Reading from the N-terminus, the 195-residue chain is Nucleoside triphosphate pyrophosphatase (195 aa).

D70 functions as the Proton acceptor in the catalytic mechanism.

It belongs to the Maf family. It depends on a divalent metal cation as a cofactor.

It is found in the cytoplasm. It catalyses the reaction a ribonucleoside 5'-triphosphate + H2O = a ribonucleoside 5'-phosphate + diphosphate + H(+). It carries out the reaction a 2'-deoxyribonucleoside 5'-triphosphate + H2O = a 2'-deoxyribonucleoside 5'-phosphate + diphosphate + H(+). Functionally, nucleoside triphosphate pyrophosphatase. May have a dual role in cell division arrest and in preventing the incorporation of modified nucleotides into cellular nucleic acids. The chain is Nucleoside triphosphate pyrophosphatase from Microcystis aeruginosa (strain NIES-843 / IAM M-2473).